The primary structure comprises 201 residues: Recombination protein RecR (201 aa).

The C4-type zinc finger occupies Cys57–Cys72. The 96-residue stretch at Gly81–Pro176 folds into the Toprim domain.

Belongs to the RecR family.

In terms of biological role, may play a role in DNA repair. It seems to be involved in an RecBC-independent recombinational process of DNA repair. It may act with RecF and RecO. This is Recombination protein RecR from Histophilus somni (strain 129Pt) (Haemophilus somnus).